A 231-amino-acid polypeptide reads, in one-letter code: Large ribosomal subunit protein uL1 (231 aa).

Belongs to the universal ribosomal protein uL1 family. In terms of assembly, part of the 50S ribosomal subunit.

Binds directly to 23S rRNA. The L1 stalk is quite mobile in the ribosome, and is involved in E site tRNA release. Functionally, protein L1 is also a translational repressor protein, it controls the translation of the L11 operon by binding to its mRNA. This is Large ribosomal subunit protein uL1 from Staphylococcus haemolyticus (strain JCSC1435).